An 87-amino-acid chain; its full sequence is MFVVIFGRPGCPYCVRAKEHAETLKAKRDDFNYRYVDIHAEGITKADLEKTIGKPVETVPQIFIDEQHIGGCTDFEAYAKENLGLFD.

Residues 1 to 87 (MFVVIFGRPG…YAKENLGLFD (87 aa)) enclose the Glutaredoxin domain. Cys11 and Cys14 are oxidised to a cystine.

Belongs to the glutaredoxin family. As to quaternary structure, monomer.

It is found in the cytoplasm. Functionally, has a glutathione-disulfide oxidoreductase activity in the presence of NADPH and glutathione reductase. Reduces low molecular weight disulfides and proteins. This is Glutaredoxin (grx) from Vibrio cholerae serotype O1 (strain ATCC 39315 / El Tor Inaba N16961).